An 87-amino-acid chain; its full sequence is uncharacterized protein (87 aa).

A helical membrane pass occupies residues 29–49; the sequence is ILWMIIFVVIIAVIIYILISP.

The protein localises to the membrane. This is an uncharacterized protein from Methanocaldococcus jannaschii (strain ATCC 43067 / DSM 2661 / JAL-1 / JCM 10045 / NBRC 100440) (Methanococcus jannaschii).